A 241-amino-acid chain; its full sequence is PRA1 family protein H (241 aa).

A run of 3 helical transmembrane segments spans residues 142 to 162, 189 to 205, and 209 to 228; these read LFIV…VGLL, LSIG…LTFL, and MALF…HAGF.

This sequence belongs to the PRA1 family.

Its subcellular location is the endoplasmic reticulum membrane. In terms of biological role, may be involved in both secretory and endocytic intracellular trafficking in the endosomal/prevacuolar compartments. This Arabidopsis thaliana (Mouse-ear cress) protein is PRA1 family protein H (PRA1H).